The following is a 165-amino-acid chain: Probable chemoreceptor glutamine deamidase CheD (165 aa).

This sequence belongs to the CheD family.

It carries out the reaction L-glutaminyl-[protein] + H2O = L-glutamyl-[protein] + NH4(+). In terms of biological role, probably deamidates glutamine residues to glutamate on methyl-accepting chemotaxis receptors (MCPs), playing an important role in chemotaxis. The polypeptide is Probable chemoreceptor glutamine deamidase CheD (Clostridium tetani (strain Massachusetts / E88)).